The chain runs to 688 residues: Probable glucan endo-1,3-beta-glucosidase btgC (688 aa).

Disordered stretches follow at residues 1 to 49 (MSGP…MNGQ), 61 to 91 (DGRQGWGRSPEPSPSLLTGSSATPGMDNLGP), and 169 to 194 (QLTPGQSVSHLSSTNPSQRNLYDIPY). Topologically, residues 1 to 307 (MSGPNRTYSF…PKPGGGNKKR (307 aa)) are cytoplasmic. Residues 175–188 (SVSHLSSTNPSQRN) are compositionally biased toward polar residues. A helical; Signal-anchor for type II membrane protein transmembrane segment spans residues 308–328 (GWIVGAILAFIIIGAIVGGAV). Residues 329–688 (GGTIGHRGNE…IPDCGGKTAT (360 aa)) are Extracellular-facing. A disordered region spans residues 334–363 (HRGNEEPSSASSASSSSTQTATEDTSVNGD). The span at 341-355 (SSASSASSSSTQTAT) shows a compositional bias: low complexity. N-linked (GlcNAc...) asparagine glycans are attached at residues Asn408, Asn431, and Asn459. The Proton donor role is filled by Glu491. Glu590 functions as the Nucleophile in the catalytic mechanism. N-linked (GlcNAc...) asparagine glycosylation is found at Asn609 and Asn635.

It belongs to the glycosyl hydrolase 17 family.

It is found in the cell membrane. It catalyses the reaction Hydrolysis of (1-&gt;3)-beta-D-glucosidic linkages in (1-&gt;3)-beta-D-glucans.. Functionally, glucanases play a role in cell expansion during growth, in cell-cell fusion during mating, and in spore release during sporulation. This enzyme may be involved in beta-glucan degradation. Active on laminarin and lichenan. The protein is Probable glucan endo-1,3-beta-glucosidase btgC (btgC) of Aspergillus fumigatus (strain CBS 144.89 / FGSC A1163 / CEA10) (Neosartorya fumigata).